A 506-amino-acid chain; its full sequence is Thyroid hormone receptor alpha (506 aa).

The segment at 1–32 (MEQKPSKVECGSDPEENSARSPDGKRKRKNGQ) is disordered. The segment at 1-52 (MEQKPSKVECGSDPEENSARSPDGKRKRKNGQCSLKTSMSGYIPSYLDKDEQ) is modulating. Zn(2+) is bound by residues Cys-53, Cys-56, Cys-70, Cys-73, Cys-91, Cys-97, Cys-107, and Cys-110. 2 NR C4-type zinc fingers span residues 53 to 73 (CVVCGDKATGYHYRCITCEGC) and 91 to 115 (CKYDSCCVIDKITRNQCQLCRFKKC). Positions 53-127 (CVVCGDKATG…VGMAMDLVLD (75 aa)) form a DNA-binding region, nuclear receptor. The NR LBD domain occupies 163–407 (EEWDLIHVAT…EGQQLLGMHV (245 aa)). 3,3',5-triiodo-L-thyronine-binding residues include Arg-228 and Ser-277. A disordered region spans residues 460 to 506 (GEDDSSEAGSLTSSDEDPEVCEDAAQATQPLPEAPPRADGEGGGGGS).

The protein belongs to the nuclear hormone receptor family. NR1 subfamily. Binds DNA as a dimer; homodimer and heterodimer with RXRB. Interacts with NCOA3 and NCOA6 coactivators, leading to a strong increase of transcription of target genes. Probably interacts with SFPQ. Interacts with C1D. Interacts with AKAP13. Interacts with TP53INP2. Interacts with PER2. Interacts with PER2. Isoform alpha-2 and isoform alpha-1 interact with TACC1, but the interaction with alpha-1 is weaker. The interaction with isoform alpha-1, but not alpha-2, is decreased in the presence of thyroid hormone T3.

The protein resides in the nucleus. It is found in the cytoplasm. Its function is as follows. Nuclear hormone receptor that can act as a repressor or activator of transcription. High affinity receptor for thyroid hormones, including triiodothyronine and thyroxine. The polypeptide is Thyroid hormone receptor alpha (THRA) (Sus scrofa (Pig)).